A 317-amino-acid polypeptide reads, in one-letter code: Sperm acrosome membrane-associated protein 6 (317 aa).

An N-terminal signal peptide occupies residues 1 to 18 (MFVFIAKLLIFSSVITSA). Over 19–281 (FTCYQCFIDE…PSFSFWLPRP (263 aa)) the chain is Extracellular. 5 disulfide bridges follow: Cys-21–Cys-143, Cys-24–Cys-146, Cys-35–Cys-51, Cys-128–Cys-151, and Cys-132–Cys-157. N-linked (GlcNAc...) asparagine glycosylation is present at Asn-29. The Ig-like domain maps to 123-237 (PRVSGCLPPC…EVLSQEQSLV (115 aa)). N-linked (GlcNAc...) asparagine glycosylation is present at Asn-168. Residues Cys-174 and Cys-227 are joined by a disulfide bond. A helical transmembrane segment spans residues 282–302 (ALLITCLTATMLLIFLSLGAM). Residues 303 to 317 (CRLWYQIRTNVSNPA) are Cytoplasmic-facing.

Belongs to the SPACA6 family. Forms a complex with izumo1 and tmem81 on spermatocyte cell membrane. The complex binds to oocyte protein bncr. In terms of tissue distribution, expressed in testis.

The protein localises to the cytoplasmic vesicle. It is found in the secretory vesicle. Its subcellular location is the acrosome membrane. Its function is as follows. Sperm protein required for fusion of sperm with the egg membrane during fertilization. May regulate the expression of sperm surface protein DCST2. The sequence is that of Sperm acrosome membrane-associated protein 6 from Danio rerio (Zebrafish).